The primary structure comprises 258 residues: Probable F-box protein At2g29610 (258 aa).

The interval 1 to 25 (MVELSEIPGDPNGADPNNNPQEEDE) is disordered. Residues 8–20 (PGDPNGADPNNNP) are compositionally biased toward low complexity. The region spanning 28 to 74 (LPILLQLPEELIERIIAHFPQCYSPSPILVCETFRQVINSDHFYYVT) is the F-box domain.

In Arabidopsis thaliana (Mouse-ear cress), this protein is Probable F-box protein At2g29610.